The following is a 449-amino-acid chain: Packaging protein 1 (449 aa).

The segment covering 1–10 (MESRGKHRLK) has biased composition (basic residues). Residues 1-64 (MESRGKHRLK…SSNSILHCPP (64 aa)) form a disordered region. Positions 11–25 (KNGESKENLGEHEQA) are enriched in basic and acidic residues. Over residues 35-59 (SADSLSSPVAEPNFSSPGGRSSNSI) the composition is skewed to polar residues. ATP is bound at residue 168-175 (GPTGSGKS). The DNA-binding stretch occupies residues 437–449 (TAYSKKCDKLANK).

This sequence belongs to the adenoviridae packaging protein 1 family. In terms of assembly, homodimer. Part of a genome packaging complex composed of packaging proteins 1, 2 and 3; this complex specifically binds to the packaging sequence on the left end of viral genomic DNA and performs packaging of the viral genome. Interacts with protein 33K.

It localises to the virion. The protein localises to the host nucleus. Its subcellular location is the host nucleoplasm. The protein resides in the host nucleolus. In terms of biological role, component of the packaging machinery which encapsidates the viral DNA into preformed capsids and transcriptional activator of the viral major late promoter (MLP). Binds, along with packaging proteins 2 and 3, to the specific packaging sequence on the left end of viral genomic DNA and displays ATPase activity thereby providing the power stroke of the packaging machinery. The activity of packaging protein IVa2 is stimulated by protein 33K which acts as a terminase. May be the protein that pumps DNA into the capsid powered by ATP hydrolysis. Specifically binds to the 5'-CG-3' nucleotides of the repeats making up the packaging sequence. Component of the DEF-A and DEF-B transcription factors that bind downstream elements of the major late promoter (MLP), and stimulate transcription from the MLP after initiation of viral DNA replication. DEF-A is a heterodimer packaging proteins 1 and 2 and DEF-B is a homodimer of packaging protein 1. This Mus musculus (Mouse) protein is Packaging protein 1.